The following is a 493-amino-acid chain: MSLLKMEYNLYAELKKMTCGQPLSLFNEDGDFVEVEPGSSFKFLIPKGFYASPSVKTSLVFETLTTTDNKITSINPTNAPKLYPLQRKVVSEVVSNMRKMIESKRPLYITLHLACGFGKTITTCYLMATHGRKTVICVPNKMLIHQWKTQVEAVGLEHKISIDGVSSLLKELKTQSPDVLIVVSRHLTNDAFCKYINKHYDLFILDESHTYNLMNNTAVTRFLAYYPPMMCYFLTATPRPSNRIYCNSIINIAKLSDLKKTIYAVDSFFEPYSTDNIRHMIKRLDGPSNKYHIYTEKLLSVDEPRNQLILNTLVEEFKSGTINRILVITKLREHMVFFYKRLLDFFGSEVVFIGDAQNRRTPDMVKSIKELNRFIFVSTLFYSGTGLDIPSLDSLFICSAVINNMQIEQLLGRVCRETELLDRTVYVFPSTSIKEIKYMIGNFVQRIISLSVDKLGFKQKSYRKHQESDPTSVCTTSSREERVLNRIFNSQNR.

The Helicase ATP-binding domain occupies 100–256; sequence MIESKRPLYI…NSIINIAKLS (157 aa). 113 to 120 provides a ligand contact to ATP; that stretch reads LACGFGKT. The DESH box motif lies at 206–209; sequence DESH.

Belongs to the helicase family. Poxviruses subfamily. In terms of assembly, interacts with G2. Might be part of a transcription complex composed at least of G2, A18, and H5.

It is found in the virion. DNA helicase which seems to act as a postreplicative transcription termination factor. Involved in ATP-dependent release of nascent RNA. Forms a stable complex with single-stranded DNA, and to a lesser extent RNA. The protein is Transcript termination protein A18 of Homo sapiens (Human).